The primary structure comprises 314 residues: Ribosomal RNA small subunit methyltransferase H (314 aa).

Residues 36 to 38 (GGH), aspartate 56, phenylalanine 83, aspartate 104, and glutamine 111 contribute to the S-adenosyl-L-methionine site.

It belongs to the methyltransferase superfamily. RsmH family.

It is found in the cytoplasm. It carries out the reaction cytidine(1402) in 16S rRNA + S-adenosyl-L-methionine = N(4)-methylcytidine(1402) in 16S rRNA + S-adenosyl-L-homocysteine + H(+). Its function is as follows. Specifically methylates the N4 position of cytidine in position 1402 (C1402) of 16S rRNA. This Syntrophotalea carbinolica (strain DSM 2380 / NBRC 103641 / GraBd1) (Pelobacter carbinolicus) protein is Ribosomal RNA small subunit methyltransferase H.